Reading from the N-terminus, the 131-residue chain is Small ribosomal subunit protein uS11 (131 aa).

It belongs to the universal ribosomal protein uS11 family. In terms of assembly, part of the 30S ribosomal subunit. Interacts with proteins S7 and S18. Binds to IF-3.

In terms of biological role, located on the platform of the 30S subunit, it bridges several disparate RNA helices of the 16S rRNA. Forms part of the Shine-Dalgarno cleft in the 70S ribosome. The sequence is that of Small ribosomal subunit protein uS11 from Thermotoga neapolitana (strain ATCC 49049 / DSM 4359 / NBRC 107923 / NS-E).